The primary structure comprises 220 residues: Ribosomal RNA large subunit methyltransferase E (220 aa).

The S-adenosyl-L-methionine site is built by glycine 60, tryptophan 62, aspartate 92, aspartate 108, and aspartate 133. Catalysis depends on lysine 173, which acts as the Proton acceptor.

It belongs to the class I-like SAM-binding methyltransferase superfamily. RNA methyltransferase RlmE family.

It localises to the cytoplasm. It catalyses the reaction uridine(2552) in 23S rRNA + S-adenosyl-L-methionine = 2'-O-methyluridine(2552) in 23S rRNA + S-adenosyl-L-homocysteine + H(+). Functionally, specifically methylates the uridine in position 2552 of 23S rRNA at the 2'-O position of the ribose in the fully assembled 50S ribosomal subunit. This Paraburkholderia xenovorans (strain LB400) protein is Ribosomal RNA large subunit methyltransferase E.